We begin with the raw amino-acid sequence, 257 residues long: Acetylglutamate kinase (257 aa).

Substrate is bound by residues 40-41, Arg-62, and Asn-155; that span reads GG.

It belongs to the acetylglutamate kinase family. ArgB subfamily.

It is found in the cytoplasm. The enzyme catalyses N-acetyl-L-glutamate + ATP = N-acetyl-L-glutamyl 5-phosphate + ADP. It functions in the pathway amino-acid biosynthesis; L-arginine biosynthesis; N(2)-acetyl-L-ornithine from L-glutamate: step 2/4. Its function is as follows. Catalyzes the ATP-dependent phosphorylation of N-acetyl-L-glutamate. This chain is Acetylglutamate kinase, found in Shouchella clausii (strain KSM-K16) (Alkalihalobacillus clausii).